A 538-amino-acid chain; its full sequence is Nicotinate phosphoribosyltransferase (538 aa).

2 residues coordinate nicotinate: Y21 and T210. At H213 the chain carries Phosphohistidine. R318 provides a ligand contact to nicotinate. Position 380 (T380) interacts with 5-phospho-alpha-D-ribose 1-diphosphate.

It belongs to the NAPRTase family. In terms of assembly, homodimer. Mg(2+) is required as a cofactor. The cofactor is Mn(2+). Post-translationally, transiently phosphorylated on a His residue during the reaction cycle. Phosphorylation strongly increases the affinity for substrates and increases the rate of nicotinate D-ribonucleotide production. Dephosphorylation regenerates the low-affinity form of the enzyme, leading to product release.

It localises to the cytoplasm. It is found in the cytosol. It carries out the reaction nicotinate + 5-phospho-alpha-D-ribose 1-diphosphate + ATP + H2O = nicotinate beta-D-ribonucleotide + ADP + phosphate + diphosphate. The protein operates within cofactor biosynthesis; NAD(+) biosynthesis; nicotinate D-ribonucleotide from nicotinate: step 1/1. Functionally, catalyzes the first step in the biosynthesis of NAD from nicotinic acid, the ATP-dependent synthesis of beta-nicotinate D-ribonucleotide from nicotinate and 5-phospho-D-ribose 1-phosphate. Helps prevent cellular oxidative stress via its role in NAD biosynthesis. This is Nicotinate phosphoribosyltransferase (Naprt) from Rattus norvegicus (Rat).